Consider the following 258-residue polypeptide: Acetylglutamate kinase (258 aa).

Substrate-binding positions include 44-45 (GG), R66, and N158. Residues 181 to 186 (DVSGIL) and 209 to 211 (IIT) contribute to the ATP site.

The protein belongs to the acetylglutamate kinase family. ArgB subfamily. Homodimer.

The protein localises to the cytoplasm. The enzyme catalyses N-acetyl-L-glutamate + ATP = N-acetyl-L-glutamyl 5-phosphate + ADP. The protein operates within amino-acid biosynthesis; L-arginine biosynthesis; N(2)-acetyl-L-ornithine from L-glutamate: step 2/4. Its function is as follows. Catalyzes the ATP-dependent phosphorylation of N-acetyl-L-glutamate. This is Acetylglutamate kinase from Salmonella paratyphi A (strain ATCC 9150 / SARB42).